The chain runs to 399 residues: Enoyl-[acyl-carrier-protein] reductase [NADH] (399 aa).

NAD(+) contacts are provided by residues 48–53 (GASTGY), 74–75 (FE), 111–112 (DA), and 139–140 (LA). A substrate-binding site is contributed by Tyr225. The Proton donor role is filled by Tyr235. NAD(+) contacts are provided by residues Lys244 and 274 to 276 (VVT).

The protein belongs to the TER reductase family. As to quaternary structure, monomer.

It catalyses the reaction a 2,3-saturated acyl-[ACP] + NAD(+) = a (2E)-enoyl-[ACP] + NADH + H(+). Its pathway is lipid metabolism; fatty acid biosynthesis. Functionally, involved in the final reduction of the elongation cycle of fatty acid synthesis (FAS II). Catalyzes the reduction of a carbon-carbon double bond in an enoyl moiety that is covalently linked to an acyl carrier protein (ACP). The chain is Enoyl-[acyl-carrier-protein] reductase [NADH] from Yersinia enterocolitica serotype O:8 / biotype 1B (strain NCTC 13174 / 8081).